Consider the following 152-residue polypeptide: Transcriptional regulator MraZ (152 aa).

SpoVT-AbrB domains lie at alanine 5–glutamate 52 and alanine 81–threonine 124.

This sequence belongs to the MraZ family. As to quaternary structure, forms oligomers.

It localises to the cytoplasm. The protein localises to the nucleoid. In terms of biological role, negatively regulates its own expression and that of the subsequent genes in the proximal part of the division and cell wall (dcw) gene cluster. Acts by binding directly to DNA. May also regulate the expression of genes outside the dcw cluster. The chain is Transcriptional regulator MraZ from Klebsiella pneumoniae (strain 342).